Here is a 225-residue protein sequence, read N- to C-terminus: Putative elongation factor 1 gamma homolog (225 aa).

One can recognise a GST C-terminal domain in the interval 94 to 225 (DFKTRADILR…MCETEMQPIK (132 aa)).

In Saccharomyces cerevisiae (strain ATCC 204508 / S288c) (Baker's yeast), this protein is Putative elongation factor 1 gamma homolog.